Reading from the N-terminus, the 329-residue chain is GTP 3',8-cyclase (329 aa).

One can recognise a Radical SAM core domain in the interval 8-234 (AFARKFYYLR…QLRQRSDGPA (227 aa)). Position 17 (arginine 17) interacts with GTP. Cysteine 24 and cysteine 28 together coordinate [4Fe-4S] cluster. Tyrosine 30 contributes to the S-adenosyl-L-methionine binding site. Residue cysteine 31 coordinates [4Fe-4S] cluster. GTP is bound at residue arginine 68. Residue glycine 72 coordinates S-adenosyl-L-methionine. A GTP-binding site is contributed by threonine 99. Residue serine 123 coordinates S-adenosyl-L-methionine. Lysine 160 contacts GTP. Methionine 194 is an S-adenosyl-L-methionine binding site. Residues cysteine 257 and cysteine 260 each contribute to the [4Fe-4S] cluster site. A GTP-binding site is contributed by 262–264 (RLR). A [4Fe-4S] cluster-binding site is contributed by cysteine 274.

Belongs to the radical SAM superfamily. MoaA family. As to quaternary structure, monomer and homodimer. [4Fe-4S] cluster serves as cofactor.

The catalysed reaction is GTP + AH2 + S-adenosyl-L-methionine = (8S)-3',8-cyclo-7,8-dihydroguanosine 5'-triphosphate + 5'-deoxyadenosine + L-methionine + A + H(+). It functions in the pathway cofactor biosynthesis; molybdopterin biosynthesis. Its function is as follows. Catalyzes the cyclization of GTP to (8S)-3',8-cyclo-7,8-dihydroguanosine 5'-triphosphate. This chain is GTP 3',8-cyclase, found in Escherichia coli (strain K12 / MC4100 / BW2952).